The chain runs to 341 residues: Heme A synthase (341 aa).

Transmembrane regions (helical) follow at residues 8-28, 92-112, 126-146, 160-180, 201-221, 256-276, 294-314, and 315-335; these read VIIW…VGGI, FHRF…VYFL, IVLL…VRSG, LHLT…LDLI, AALL…AGLI, VQFV…FLFF, LVVF…YSVP, and LALG…MTYT. Residue His260 coordinates heme. Position 321 (His321) interacts with heme.

Belongs to the COX15/CtaA family. Type 2 subfamily. Interacts with CtaB. Requires heme b as cofactor.

The protein resides in the cell membrane. It carries out the reaction Fe(II)-heme o + 2 A + H2O = Fe(II)-heme a + 2 AH2. The protein operates within porphyrin-containing compound metabolism; heme A biosynthesis; heme A from heme O: step 1/1. Its function is as follows. Catalyzes the conversion of heme O to heme A by two successive hydroxylations of the methyl group at C8. The first hydroxylation forms heme I, the second hydroxylation results in an unstable dihydroxymethyl group, which spontaneously dehydrates, resulting in the formyl group of heme A. The chain is Heme A synthase from Flavobacterium johnsoniae (strain ATCC 17061 / DSM 2064 / JCM 8514 / BCRC 14874 / CCUG 350202 / NBRC 14942 / NCIMB 11054 / UW101) (Cytophaga johnsonae).